The following is a 129-amino-acid chain: Lysozyme C (129 aa).

Positions 1–129 constitute a C-type lysozyme domain; the sequence is KVYGRCELAA…VSVWTRGCRL (129 aa). 4 disulfide bridges follow: C6–C127, C30–C115, C64–C80, and C76–C94. Active-site residues include E35 and D52.

The protein belongs to the glycosyl hydrolase 22 family. As to quaternary structure, monomer.

The protein localises to the secreted. The enzyme catalyses Hydrolysis of (1-&gt;4)-beta-linkages between N-acetylmuramic acid and N-acetyl-D-glucosamine residues in a peptidoglycan and between N-acetyl-D-glucosamine residues in chitodextrins.. In terms of biological role, lysozymes have primarily a bacteriolytic function; those in tissues and body fluids are associated with the monocyte-macrophage system and enhance the activity of immunoagents. The sequence is that of Lysozyme C (LYZ) from Lophura leucomelanos (Kalij pheasant).